Reading from the N-terminus, the 190-residue chain is Potassium-transporting ATPase KdpC subunit (190 aa).

Residues 10 to 30 traverse the membrane as a helical segment; the sequence is VLLLVLTGLTGFAYPLLSTAI.

The protein belongs to the KdpC family. In terms of assembly, the system is composed of three essential subunits: KdpA, KdpB and KdpC.

The protein localises to the cell inner membrane. In terms of biological role, part of the high-affinity ATP-driven potassium transport (or Kdp) system, which catalyzes the hydrolysis of ATP coupled with the electrogenic transport of potassium into the cytoplasm. This subunit acts as a catalytic chaperone that increases the ATP-binding affinity of the ATP-hydrolyzing subunit KdpB by the formation of a transient KdpB/KdpC/ATP ternary complex. The polypeptide is Potassium-transporting ATPase KdpC subunit (Sorangium cellulosum (strain So ce56) (Polyangium cellulosum (strain So ce56))).